The following is a 257-amino-acid chain: Phosphate import ATP-binding protein PstB (257 aa).

An ABC transporter domain is found at 11 to 252; the sequence is FNISRLYLYI…PKNELTEKYV (242 aa). 43–50 provides a ligand contact to ATP; sequence GPSGSGKS.

It belongs to the ABC transporter superfamily. Phosphate importer (TC 3.A.1.7) family. As to quaternary structure, the complex is composed of two ATP-binding proteins (PstB), two transmembrane proteins (PstC and PstA) and a solute-binding protein (PstS).

It is found in the cell membrane. The catalysed reaction is phosphate(out) + ATP + H2O = ADP + 2 phosphate(in) + H(+). Functionally, part of the ABC transporter complex PstSACB involved in phosphate import. Responsible for energy coupling to the transport system. This chain is Phosphate import ATP-binding protein PstB, found in Saccharolobus solfataricus (strain ATCC 35092 / DSM 1617 / JCM 11322 / P2) (Sulfolobus solfataricus).